Here is a 231-residue protein sequence, read N- to C-terminus: ATP-dependent dethiobiotin synthetase BioD 2 (231 aa).

ATP is bound at residue 13–18; sequence SVGKTV. Threonine 17 contacts Mg(2+). The active site involves lysine 38. Residues aspartate 55, 112–115, 172–173, 201–203, and glutamine 208 each bind ATP; these read EGTG, NR, and PYL. Aspartate 55 and glutamate 112 together coordinate Mg(2+).

It belongs to the dethiobiotin synthetase family. As to quaternary structure, homodimer. Mg(2+) serves as cofactor.

Its subcellular location is the cytoplasm. The enzyme catalyses (7R,8S)-7,8-diammoniononanoate + CO2 + ATP = (4R,5S)-dethiobiotin + ADP + phosphate + 3 H(+). It functions in the pathway cofactor biosynthesis; biotin biosynthesis; biotin from 7,8-diaminononanoate: step 1/2. Its function is as follows. Catalyzes a mechanistically unusual reaction, the ATP-dependent insertion of CO2 between the N7 and N8 nitrogen atoms of 7,8-diaminopelargonic acid (DAPA, also called 7,8-diammoniononanoate) to form a ureido ring. This is ATP-dependent dethiobiotin synthetase BioD 2 from Salmonella typhi.